The sequence spans 305 residues: Ribonuclease BN (305 aa).

Residues His-63, His-65, Asp-67, His-68, His-141, Asp-212, and His-270 each contribute to the Zn(2+) site. Catalysis depends on Asp-67, which acts as the Proton acceptor.

The protein belongs to the RNase Z family. RNase BN subfamily. Homodimer. Zn(2+) is required as a cofactor.

In terms of biological role, zinc phosphodiesterase, which has both exoribonuclease and endoribonuclease activities. The chain is Ribonuclease BN from Proteus mirabilis (strain HI4320).